The chain runs to 225 residues: Single-pass membrane and coiled-coil domain-containing protein 3 (225 aa).

Residues 62–92 (IKENCDLIIQAIMKIQKELQKVDEALKDKLE) adopt a coiled-coil conformation. The chain crosses the membrane as a helical span at residues 155 to 175 (IGASLLGSIGVAVLGLGIDMI). The stretch at 183–207 (VEKTQLQAAIKSYEKHLVEFKSASE) forms a coiled coil.

It localises to the membrane. This Homo sapiens (Human) protein is Single-pass membrane and coiled-coil domain-containing protein 3 (SMCO3).